The sequence spans 198 residues: Recombination protein RecR (198 aa).

The segment at 57-72 (CPVCFNITDAERCDVC) adopts a C4-type zinc-finger fold. The Toprim domain maps to 80–173 (NLICVVEEPG…VVSRIAYGLP (94 aa)).

This sequence belongs to the RecR family.

May play a role in DNA repair. It seems to be involved in an RecBC-independent recombinational process of DNA repair. It may act with RecF and RecO. This is Recombination protein RecR from Deinococcus deserti (strain DSM 17065 / CIP 109153 / LMG 22923 / VCD115).